The following is a 590-amino-acid chain: Glutamine--tRNA ligase (590 aa).

Residues Pro55–His65 carry the 'HIGH' region motif. ATP is bound by residues Glu56–Asn58 and His62–Ser68. L-glutamine is bound by residues Asp93 and Tyr238. ATP contacts are provided by residues Thr257 and Arg292–Leu293. A 'KMSKS' region motif is present at residues Ile299–Arg303.

This sequence belongs to the class-I aminoacyl-tRNA synthetase family. Monomer.

It localises to the cytoplasm. The enzyme catalyses tRNA(Gln) + L-glutamine + ATP = L-glutaminyl-tRNA(Gln) + AMP + diphosphate. The polypeptide is Glutamine--tRNA ligase (Polynucleobacter necessarius subsp. necessarius (strain STIR1)).